The following is a 240-amino-acid chain: Endo-chitosanase B (240 aa).

The signal sequence occupies residues 1 to 17; that stretch reads MRLSEILAVALVTGATA. Residue asparagine 86 is glycosylated (N-linked (GlcNAc...) asparagine).

This sequence belongs to the glycosyl hydrolase 75 family.

The protein resides in the secreted. The enzyme catalyses Endohydrolysis of beta-(1-&gt;4)-linkages between D-glucosamine residues in a partly acetylated chitosan.. Functionally, chitosanase catalyzing the endo-type cleavage of chitosan, the deacylated form of chitin. Chitosanase may be crucial in the degradation of the deacetylated portion of chitin in the fungal cell wall. Chitoolisaccharides produced by the hydrolysis of partially N-acetylated chitosan are known to have many biological activities, including antibacterial activity, immune-enhancing effects, and elicitor activity. In Aspergillus oryzae (Yellow koji mold), this protein is Endo-chitosanase B (csnB).